Here is a 156-residue protein sequence, read N- to C-terminus: Ribosome maturation factor RimP (156 aa).

The protein belongs to the RimP family.

It localises to the cytoplasm. Functionally, required for maturation of 30S ribosomal subunits. This chain is Ribosome maturation factor RimP, found in Prochlorococcus marinus (strain NATL2A).